A 191-amino-acid polypeptide reads, in one-letter code: Fe/S biogenesis protein NfuA (191 aa).

[4Fe-4S] cluster contacts are provided by cysteine 149 and cysteine 152.

It belongs to the NfuA family. Homodimer. [4Fe-4S] cluster is required as a cofactor.

Its function is as follows. Involved in iron-sulfur cluster biogenesis. Binds a 4Fe-4S cluster, can transfer this cluster to apoproteins, and thereby intervenes in the maturation of Fe/S proteins. Could also act as a scaffold/chaperone for damaged Fe/S proteins. This Photorhabdus laumondii subsp. laumondii (strain DSM 15139 / CIP 105565 / TT01) (Photorhabdus luminescens subsp. laumondii) protein is Fe/S biogenesis protein NfuA.